We begin with the raw amino-acid sequence, 185 residues long: V-type ATP synthase subunit E (185 aa).

It belongs to the V-ATPase E subunit family.

Functionally, produces ATP from ADP in the presence of a proton gradient across the membrane. This is V-type ATP synthase subunit E from Deinococcus radiodurans (strain ATCC 13939 / DSM 20539 / JCM 16871 / CCUG 27074 / LMG 4051 / NBRC 15346 / NCIMB 9279 / VKM B-1422 / R1).